The primary structure comprises 516 residues: Thioredoxin reductase 2, mitochondrial (516 aa).

62–79 serves as a coordination point for FAD; it reads DYVKPTPVGTKWGIGGTC. Cys-79 and Cys-84 are joined by a disulfide. Catalysis depends on His-489, which acts as the Proton acceptor.

Belongs to the class-I pyridine nucleotide-disulfide oxidoreductase family. In terms of assembly, homodimer. The cofactor is FAD.

It localises to the mitochondrion. It catalyses the reaction [thioredoxin]-dithiol + NADP(+) = [thioredoxin]-disulfide + NADPH + H(+). Its function is as follows. Thioredoxin system is a major player in glutathione metabolism, due to the demonstrated absence of a glutathione reductase. Functionally interacts with the Sod/Cat reactive oxidation species (ROS) defense system and thereby has a role in preadult development and life span. Lack of a glutathione reductase suggests antioxidant defense in Drosophila, and probably in related insects, differs fundamentally from that in other organisms. This is Thioredoxin reductase 2, mitochondrial from Drosophila melanogaster (Fruit fly).